Here is a 260-residue protein sequence, read N- to C-terminus: Transcription factor BEE 1 (260 aa).

The disordered stretch occupies residues 118 to 139; the sequence is ETGSLRRGKRLKKKKEEEDEKE. In terms of domain architecture, bHLH spans 151–201; that stretch reads QATDSHSLAERVRRGKINERLRCLQDMVPGCYKAMGMATMLDEIINYVQSL.

The protein resides in the nucleus. Functionally, positive regulator of brassinosteroid signaling. In Arabidopsis thaliana (Mouse-ear cress), this protein is Transcription factor BEE 1 (BEE1).